The chain runs to 108 residues: Circadian clock oscillator protein KaiB (108 aa).

This sequence belongs to the KaiB family. As to quaternary structure, undergoes a major conformational rearrangment; in the free state forms homotetramers with 2 dimers. When bound to the CI domain of KaiC, KaiA or CikA switches to a monomeric thioredoxin-fold (KaiB(fs)). The KaiABC complex composition changes during the circadian cycle to control KaiC phosphorylation. Complexes KaiC(6), KaiA(2-4):KaiC(6), KaiB(6):KaiC(6) and KaiC(6):KaiB(6):KaiA(12) are among the most important forms, many form cooperatively. Binds to KaiA; 1 KaiB(fs) binds to the KaiA homodimer. Binds to the B-loop in the CI domain of KaiC; SasA and KaiB compete to bind to the CI domain. Binding to KaiC CI domain occurs 1:1. KaiA and CikA bind to the same region of KaiB(fs) and therefore compete.

Functionally, key component of the KaiABC oscillator complex, which constitutes the main circadian regulator in cyanobacteria. Its composition changes during the circadian cycle to control KaiC phosphorylation. KaiA stimulates KaiC autophosphorylation, while KaiB sequesters KaiA, leading to KaiC autodephosphorylation. KaiA binding to KaiC yields KaiA(2-4):KaiC(6) complexes which stimulate KaiC autophosphorylation. Phospho-Ser-431 KaiC accumulation triggers binding of KaiB to form the KaiB(6):KaiC(6) complex, leading to changes in the output regulators CikA and SasA. KaiB switches to a thioredoxin-like fold (KaiB(fs)) in complex with KaiC. KaiB(6):KaiC(6) formation exposes a site for KaiA binding that sequesters KaiA from the CII domain, making the KaiC(6):KaiB(6):KaiA(12) complex that results in KaiC autodephosphorylation. Complete dephosphorylation of KaiC leads to dissociation of KaiA(2):KaiB(1), completing 1 cycle of the Kai oscillator. Its function is as follows. A metamorphic protein which reversibly switches between an inactive tetrameric fold and a rare, thioredoxin-like monomeric fold (KaiB(fs)). KaiB(fs) binds phospho-KaiC, KaiA and CikA. KaiA and CikA compete for binding to KaiB(fs), and KaiB(fs) and SasA compete for binding to KaiC, thus the clock oscillator and output signal pathway are tightly coupled. The chain is Circadian clock oscillator protein KaiB from Thermosynechococcus vestitus (strain NIES-2133 / IAM M-273 / BP-1).